The primary structure comprises 356 residues: Glutamine synthetase cytosolic isozyme 1-4 (356 aa).

Ser-2 carries the post-translational modification N-acetylserine. 2 positions are modified to phosphoserine: Ser-2 and Ser-48. A GS beta-grasp domain is found at Ile-19–Gly-99. Positions Ala-37–Asp-66 are disordered. Residues Lys-106 to Pro-356 enclose the GS catalytic domain.

The protein belongs to the glutamine synthetase family. Homooctamer. Interacts with GRF3. As to expression, expressed in the pericycle in the region of lateral root emergence.

The protein resides in the cytoplasm. The catalysed reaction is L-glutamate + NH4(+) + ATP = L-glutamine + ADP + phosphate + H(+). Functionally, high-affinity glutamine synthetase. May contribute to the homeostatic control of glutamine synthesis in roots. In Arabidopsis thaliana (Mouse-ear cress), this protein is Glutamine synthetase cytosolic isozyme 1-4.